Consider the following 204-residue polypeptide: 3-isopropylmalate dehydratase small subunit (204 aa).

The protein belongs to the LeuD family. LeuD type 1 subfamily. Heterodimer of LeuC and LeuD.

It carries out the reaction (2R,3S)-3-isopropylmalate = (2S)-2-isopropylmalate. Its pathway is amino-acid biosynthesis; L-leucine biosynthesis; L-leucine from 3-methyl-2-oxobutanoate: step 2/4. Catalyzes the isomerization between 2-isopropylmalate and 3-isopropylmalate, via the formation of 2-isopropylmaleate. The polypeptide is 3-isopropylmalate dehydratase small subunit (Roseiflexus sp. (strain RS-1)).